The sequence spans 273 residues: Large ribosomal subunit protein uL2 (273 aa).

Disordered regions lie at residues 28–53 (KPFA…TTRH) and 221–273 (RGTA…RRTK). Residues 39 to 48 (KSGGRNNNGR) are compositionally biased toward low complexity.

The protein belongs to the universal ribosomal protein uL2 family. As to quaternary structure, part of the 50S ribosomal subunit. Forms a bridge to the 30S subunit in the 70S ribosome.

Its function is as follows. One of the primary rRNA binding proteins. Required for association of the 30S and 50S subunits to form the 70S ribosome, for tRNA binding and peptide bond formation. It has been suggested to have peptidyltransferase activity; this is somewhat controversial. Makes several contacts with the 16S rRNA in the 70S ribosome. The polypeptide is Large ribosomal subunit protein uL2 (Pectobacterium atrosepticum (strain SCRI 1043 / ATCC BAA-672) (Erwinia carotovora subsp. atroseptica)).